The chain runs to 441 residues: 3-phosphoshikimate 1-carboxyvinyltransferase (441 aa).

Positions 26, 27, and 31 each coordinate 3-phosphoshikimate. Lysine 26 lines the phosphoenolpyruvate pocket. Glycine 99 and arginine 127 together coordinate phosphoenolpyruvate. 6 residues coordinate 3-phosphoshikimate: serine 173, serine 174, glutamine 175, serine 203, aspartate 320, and lysine 347. Glutamine 175 lines the phosphoenolpyruvate pocket. Aspartate 320 (proton acceptor) is an active-site residue. Residues arginine 351, arginine 393, and lysine 423 each contribute to the phosphoenolpyruvate site.

This sequence belongs to the EPSP synthase family. As to quaternary structure, monomer.

Its subcellular location is the cytoplasm. It catalyses the reaction 3-phosphoshikimate + phosphoenolpyruvate = 5-O-(1-carboxyvinyl)-3-phosphoshikimate + phosphate. It functions in the pathway metabolic intermediate biosynthesis; chorismate biosynthesis; chorismate from D-erythrose 4-phosphate and phosphoenolpyruvate: step 6/7. Its function is as follows. Catalyzes the transfer of the enolpyruvyl moiety of phosphoenolpyruvate (PEP) to the 5-hydroxyl of shikimate-3-phosphate (S3P) to produce enolpyruvyl shikimate-3-phosphate and inorganic phosphate. The protein is 3-phosphoshikimate 1-carboxyvinyltransferase of Janthinobacterium sp. (strain Marseille) (Minibacterium massiliensis).